Consider the following 214-residue polypeptide: uncharacterized protein (214 aa).

Residues 1–194 (MVSANREMAV…MHYSEYLSYV (194 aa)) form the AMMECR1 domain.

This is an uncharacterized protein from Arabidopsis thaliana (Mouse-ear cress).